We begin with the raw amino-acid sequence, 137 residues long: Prefoldin subunit alpha (137 aa).

This sequence belongs to the prefoldin subunit alpha family. In terms of assembly, heterohexamer of two alpha and four beta subunits.

Its subcellular location is the cytoplasm. Molecular chaperone capable of stabilizing a range of proteins. Seems to fulfill an ATP-independent, HSP70-like function in archaeal de novo protein folding. The chain is Prefoldin subunit alpha (pfdA) from Archaeoglobus fulgidus (strain ATCC 49558 / DSM 4304 / JCM 9628 / NBRC 100126 / VC-16).